The primary structure comprises 282 residues: 4-diphosphocytidyl-2-C-methyl-D-erythritol kinase (282 aa).

Residue K9 is part of the active site. 98 to 108 (PMGGGLGGGSS) provides a ligand contact to ATP. Residue D140 is part of the active site.

The protein belongs to the GHMP kinase family. IspE subfamily. As to quaternary structure, homodimer.

It catalyses the reaction 4-CDP-2-C-methyl-D-erythritol + ATP = 4-CDP-2-C-methyl-D-erythritol 2-phosphate + ADP + H(+). It functions in the pathway isoprenoid biosynthesis; isopentenyl diphosphate biosynthesis via DXP pathway; isopentenyl diphosphate from 1-deoxy-D-xylulose 5-phosphate: step 3/6. Functionally, catalyzes the phosphorylation of the position 2 hydroxy group of 4-diphosphocytidyl-2C-methyl-D-erythritol. The protein is 4-diphosphocytidyl-2-C-methyl-D-erythritol kinase of Klebsiella pneumoniae (strain 342).